Consider the following 212-residue polypeptide: Cytochrome c biogenesis ATP-binding export protein CcmA (212 aa).

Positions 8-212 (LQATALACER…RSIDLAKGSA (205 aa)) constitute an ABC transporter domain. 40–47 (GPNGSGKT) provides a ligand contact to ATP.

It belongs to the ABC transporter superfamily. CcmA exporter (TC 3.A.1.107) family. The complex is composed of two ATP-binding proteins (CcmA) and two transmembrane proteins (CcmB).

The protein resides in the cell inner membrane. The enzyme catalyses heme b(in) + ATP + H2O = heme b(out) + ADP + phosphate + H(+). Part of the ABC transporter complex CcmAB involved in the biogenesis of c-type cytochromes; once thought to export heme, this seems not to be the case, but its exact role is uncertain. Responsible for energy coupling to the transport system. The sequence is that of Cytochrome c biogenesis ATP-binding export protein CcmA from Pseudomonas syringae pv. tomato (strain ATCC BAA-871 / DC3000).